Here is a 379-residue protein sequence, read N- to C-terminus: MKQISLLGSTGSIGTQTLDVIRDYPDQFTLSALACGTNLELCRNQIKEFQPKLVSVQRPEDAQTLAGEFGDSIEFLYGEEGLKEVARYSESDIVVTAITGSIGLLPTLSAIKAKKAVAIANKETLVSAGHLVVSAAKENDVPLIPVDSEHSAIFQALNGEPKKAVDRLILTASGGSFRDKSRAELDGVTVEQALAHPNWSMGAKVTIDSATMMNKGLEVIEAKWLFGLDYDQIDVLIHKESIIHSMVEYVDRSVIAQLGTPDMRVPIQYALTYPERFARPKHERLDLAELGKLHFEKMDMERFRCMKLAYEAGRAGGTMTTVLNAANEVAVCRFLQGEITFLEIERIIEEALSAHSPIAHPSLEEIQAVDASIRKQLQA.

The NADPH site is built by Thr-10, Gly-11, Ser-12, Ile-13, Gly-36, Asn-38, and Asn-121. Lys-122 contacts 1-deoxy-D-xylulose 5-phosphate. Glu-123 provides a ligand contact to NADPH. Asp-147 is a Mn(2+) binding site. Ser-148, Glu-149, Ser-173, and His-196 together coordinate 1-deoxy-D-xylulose 5-phosphate. Glu-149 contacts Mn(2+). Gly-202 is an NADPH binding site. 1-deoxy-D-xylulose 5-phosphate is bound by residues Ser-209, Asn-214, Lys-215, and Glu-218. Glu-218 is a binding site for Mn(2+).

Belongs to the DXR family. Mg(2+) is required as a cofactor. The cofactor is Mn(2+).

It catalyses the reaction 2-C-methyl-D-erythritol 4-phosphate + NADP(+) = 1-deoxy-D-xylulose 5-phosphate + NADPH + H(+). It functions in the pathway isoprenoid biosynthesis; isopentenyl diphosphate biosynthesis via DXP pathway; isopentenyl diphosphate from 1-deoxy-D-xylulose 5-phosphate: step 1/6. Functionally, catalyzes the NADPH-dependent rearrangement and reduction of 1-deoxy-D-xylulose-5-phosphate (DXP) to 2-C-methyl-D-erythritol 4-phosphate (MEP). This is 1-deoxy-D-xylulose 5-phosphate reductoisomerase from Shouchella clausii (strain KSM-K16) (Alkalihalobacillus clausii).